A 307-amino-acid polypeptide reads, in one-letter code: tRNA dimethylallyltransferase (307 aa).

Residue 9-16 participates in ATP binding; sequence GPTAVGKT. 11-16 is a binding site for substrate; the sequence is TAVGKT. Residues 34-37 form an interaction with substrate tRNA region; sequence DSMQ.

This sequence belongs to the IPP transferase family. Monomer. It depends on Mg(2+) as a cofactor.

The enzyme catalyses adenosine(37) in tRNA + dimethylallyl diphosphate = N(6)-dimethylallyladenosine(37) in tRNA + diphosphate. Functionally, catalyzes the transfer of a dimethylallyl group onto the adenine at position 37 in tRNAs that read codons beginning with uridine, leading to the formation of N6-(dimethylallyl)adenosine (i(6)A). The chain is tRNA dimethylallyltransferase from Levilactobacillus brevis (strain ATCC 367 / BCRC 12310 / CIP 105137 / JCM 1170 / LMG 11437 / NCIMB 947 / NCTC 947) (Lactobacillus brevis).